The chain runs to 240 residues: Transmembrane protein 65 (240 aa).

Residues 1 to 61 (MSRLLPLLRS…RRLGTHPKKE (61 aa)) constitute a mitochondrion transit peptide. The Cytoplasmic portion of the chain corresponds to 62-110 (PMEALNTAQGARDFIYSLHSTERSCLLKELHRFESIAIAQEKLEAPPPT). The chain crosses the membrane as a helical span at residues 111-131 (PGQLRYVFIHNAIPFIGFGFL). Residues 132 to 142 (DNAIMIVAGTH) lie on the Extracellular side of the membrane. Residues 143–165 (IEMSIGIILGISTMAAAALGNLV) form a helical membrane-spanning segment. At 166–209 (SDLAGLGLAGYVEALASRLGLSIPDLTPKQVDMWQTRLSTHLGK) the chain is on the cytoplasmic side. Residues 210-230 (AVGVTIGCILGMFPLIFFGGG) form a helical membrane-spanning segment. The Extracellular portion of the chain corresponds to 231-240 (EEDEKLETKS).

As to quaternary structure, monomer. Homodimer. Interacts with GJA1. Interacts weakly with DSP. Interacts with SCN1B. As to expression, predominantly expressed the ventricular tissue (at protein level).

The protein localises to the cell membrane. Its subcellular location is the mitochondrion inner membrane. Its function is as follows. Essential for maintaining proper cardiac intercalated disk (ICD) structure and function as well as cardiac conduction velocity in the heart. Its association with SCN1B is required for stabilizing the perinexus in the ICD and for localization of GJA1 and SCN5A to the ICD. May regulate the function of the gap junction protein GJA1 and may contribute to the stability and proper localization of GJA1 to cardiac intercalated disk thereby regulating gap junction communication. May also play a role in the regulation of mitochondrial respiration and mitochondrial DNA copy number maintenance. This Homo sapiens (Human) protein is Transmembrane protein 65 (TMEM65).